A 476-amino-acid polypeptide reads, in one-letter code: Bifunctional protein HldE (476 aa).

Positions 1–319 are ribokinase; the sequence is MKVSLPAFEK…EALALHHGES (319 aa). 195-198 is an ATP binding site; sequence NMSE. Asp-264 is an active-site residue. The segment at 345 to 476 is cytidylyltransferase; it reads MTNGCFDILH…AIIQNIMANQ (132 aa).

The protein in the N-terminal section; belongs to the carbohydrate kinase PfkB family. It in the C-terminal section; belongs to the cytidylyltransferase family. In terms of assembly, homodimer.

It catalyses the reaction D-glycero-beta-D-manno-heptose 7-phosphate + ATP = D-glycero-beta-D-manno-heptose 1,7-bisphosphate + ADP + H(+). The enzyme catalyses D-glycero-beta-D-manno-heptose 1-phosphate + ATP + H(+) = ADP-D-glycero-beta-D-manno-heptose + diphosphate. It participates in nucleotide-sugar biosynthesis; ADP-L-glycero-beta-D-manno-heptose biosynthesis; ADP-L-glycero-beta-D-manno-heptose from D-glycero-beta-D-manno-heptose 7-phosphate: step 1/4. The protein operates within nucleotide-sugar biosynthesis; ADP-L-glycero-beta-D-manno-heptose biosynthesis; ADP-L-glycero-beta-D-manno-heptose from D-glycero-beta-D-manno-heptose 7-phosphate: step 3/4. Catalyzes the phosphorylation of D-glycero-D-manno-heptose 7-phosphate at the C-1 position to selectively form D-glycero-beta-D-manno-heptose-1,7-bisphosphate. Functionally, catalyzes the ADP transfer from ATP to D-glycero-beta-D-manno-heptose 1-phosphate, yielding ADP-D-glycero-beta-D-manno-heptose. The chain is Bifunctional protein HldE from Shewanella putrefaciens (strain CN-32 / ATCC BAA-453).